We begin with the raw amino-acid sequence, 568 residues long: Oxygen-dependent choline dehydrogenase (568 aa).

8 to 37 (DYIIIGAGSAGNTLAARLTEDAGVTVLLLE) is a binding site for FAD. The Proton acceptor role is filled by H477.

The protein belongs to the GMC oxidoreductase family. FAD is required as a cofactor.

It catalyses the reaction choline + A = betaine aldehyde + AH2. The catalysed reaction is betaine aldehyde + NAD(+) + H2O = glycine betaine + NADH + 2 H(+). Its pathway is amine and polyamine biosynthesis; betaine biosynthesis via choline pathway; betaine aldehyde from choline (cytochrome c reductase route): step 1/1. In terms of biological role, involved in the biosynthesis of the osmoprotectant glycine betaine. Catalyzes the oxidation of choline to betaine aldehyde and betaine aldehyde to glycine betaine at the same rate. This chain is Oxygen-dependent choline dehydrogenase, found in Pseudomonas syringae pv. syringae (strain B728a).